The primary structure comprises 254 residues: Leucyl/phenylalanyl-tRNA--protein transferase (254 aa).

It belongs to the L/F-transferase family.

Its subcellular location is the cytoplasm. It carries out the reaction N-terminal L-lysyl-[protein] + L-leucyl-tRNA(Leu) = N-terminal L-leucyl-L-lysyl-[protein] + tRNA(Leu) + H(+). The catalysed reaction is N-terminal L-arginyl-[protein] + L-leucyl-tRNA(Leu) = N-terminal L-leucyl-L-arginyl-[protein] + tRNA(Leu) + H(+). It catalyses the reaction L-phenylalanyl-tRNA(Phe) + an N-terminal L-alpha-aminoacyl-[protein] = an N-terminal L-phenylalanyl-L-alpha-aminoacyl-[protein] + tRNA(Phe). Functions in the N-end rule pathway of protein degradation where it conjugates Leu, Phe and, less efficiently, Met from aminoacyl-tRNAs to the N-termini of proteins containing an N-terminal arginine or lysine. In Bordetella bronchiseptica (strain ATCC BAA-588 / NCTC 13252 / RB50) (Alcaligenes bronchisepticus), this protein is Leucyl/phenylalanyl-tRNA--protein transferase.